A 31-amino-acid polypeptide reads, in one-letter code: Photosystem II reaction center protein T (31 aa).

A helical membrane pass occupies residues 3–23 (ALVYTFLLVGTLGIIFFSIFF).

It belongs to the PsbT family. PSII is composed of 1 copy each of membrane proteins PsbA, PsbB, PsbC, PsbD, PsbE, PsbF, PsbH, PsbI, PsbJ, PsbK, PsbL, PsbM, PsbT, PsbY, PsbZ, Psb30/Ycf12, at least 3 peripheral proteins of the oxygen-evolving complex and a large number of cofactors. It forms dimeric complexes.

Its subcellular location is the plastid. It is found in the chloroplast thylakoid membrane. In terms of biological role, found at the monomer-monomer interface of the photosystem II (PS II) dimer, plays a role in assembly and dimerization of PSII. PSII is a light-driven water plastoquinone oxidoreductase, using light energy to abstract electrons from H(2)O, generating a proton gradient subsequently used for ATP formation. The chain is Photosystem II reaction center protein T from Tupiella akineta (Green alga).